The primary structure comprises 284 residues: T-cell leukemia homeobox protein 2 (284 aa).

Disordered stretches follow at residues 1-50 (MEPG…NGAF), 78-106 (GGVI…GPSG), and 139-166 (FSGT…SFSR). The segment covering 30 to 50 (TPGGGLGLGRGGQGHGENGAF) has biased composition (gly residues). Over residues 87–96 (RPLPVPPPAG) the composition is skewed to pro residues. A DNA-binding region (homeobox) is located at residues 157–216 (RKKPRTSFSRSQVLELERRFLRQKYLASAERAALAKALRMTDAQVKTWFQNRRTKWRRQT).

The protein resides in the nucleus. Its function is as follows. Transcription activator that binds DNA elements with the consensus sequence 5'-CGGTAATTGG-3'. Binds DNA via its homeobox. Required for normal cell death of enteric neurons in the gastrointestinal tract. Required for normal development of the enteric nervous system, and for proper development of normal motility of the gastrointestinal tract. In Homo sapiens (Human), this protein is T-cell leukemia homeobox protein 2 (TLX2).